Consider the following 214-residue polypeptide: Phosphatidylserine decarboxylase proenzyme (214 aa).

The active-site Schiff-base intermediate with substrate; via pyruvic acid is the serine 183. Residue serine 183 is modified to Pyruvic acid (Ser); by autocatalysis.

It belongs to the phosphatidylserine decarboxylase family. PSD-A subfamily. Heterodimer of a large membrane-associated beta subunit and a small pyruvoyl-containing alpha subunit. The cofactor is pyruvate. Is synthesized initially as an inactive proenzyme. Formation of the active enzyme involves a self-maturation process in which the active site pyruvoyl group is generated from an internal serine residue via an autocatalytic post-translational modification. Two non-identical subunits are generated from the proenzyme in this reaction, and the pyruvate is formed at the N-terminus of the alpha chain, which is derived from the carboxyl end of the proenzyme. The post-translation cleavage follows an unusual pathway, termed non-hydrolytic serinolysis, in which the side chain hydroxyl group of the serine supplies its oxygen atom to form the C-terminus of the beta chain, while the remainder of the serine residue undergoes an oxidative deamination to produce ammonia and the pyruvoyl prosthetic group on the alpha chain.

The protein resides in the cell membrane. The catalysed reaction is a 1,2-diacyl-sn-glycero-3-phospho-L-serine + H(+) = a 1,2-diacyl-sn-glycero-3-phosphoethanolamine + CO2. It participates in phospholipid metabolism; phosphatidylethanolamine biosynthesis; phosphatidylethanolamine from CDP-diacylglycerol: step 2/2. Functionally, catalyzes the formation of phosphatidylethanolamine (PtdEtn) from phosphatidylserine (PtdSer). This Chlorobaculum parvum (strain DSM 263 / NCIMB 8327) (Chlorobium vibrioforme subsp. thiosulfatophilum) protein is Phosphatidylserine decarboxylase proenzyme.